Reading from the N-terminus, the 217-residue chain is Probable GTP-binding protein EngB (217 aa).

The 174-residue stretch at 32-205 (GTPQIAFAGR…RKIVYSLIET (174 aa)) folds into the EngB-type G domain. GTP contacts are provided by residues 40-47 (GRSNAGKS), 67-71 (GKTKL), 85-88 (DLPG), 152-155 (TKID), and 184-186 (VSN). Residues Ser-47 and Thr-69 each contribute to the Mg(2+) site.

The protein belongs to the TRAFAC class TrmE-Era-EngA-EngB-Septin-like GTPase superfamily. EngB GTPase family. Mg(2+) is required as a cofactor.

In terms of biological role, necessary for normal cell division and for the maintenance of normal septation. This Leptospira interrogans serogroup Icterohaemorrhagiae serovar copenhageni (strain Fiocruz L1-130) protein is Probable GTP-binding protein EngB.